The primary structure comprises 261 residues: Indole-3-glycerol phosphate synthase (261 aa).

It belongs to the TrpC family.

The enzyme catalyses 1-(2-carboxyphenylamino)-1-deoxy-D-ribulose 5-phosphate + H(+) = (1S,2R)-1-C-(indol-3-yl)glycerol 3-phosphate + CO2 + H2O. It functions in the pathway amino-acid biosynthesis; L-tryptophan biosynthesis; L-tryptophan from chorismate: step 4/5. The chain is Indole-3-glycerol phosphate synthase from Burkholderia lata (strain ATCC 17760 / DSM 23089 / LMG 22485 / NCIMB 9086 / R18194 / 383).